The following is a 632-amino-acid chain: Phosphomethylpyrimidine synthase (632 aa).

Over residues 1–23 (MNIRSNPQQTVPAVTTGPLSSSR) the composition is skewed to polar residues. A disordered region spans residues 1–26 (MNIRSNPQQTVPAVTTGPLSSSRKIF). Residues asparagine 221, methionine 250, tyrosine 279, histidine 315, 335-337 (SRG), 376-379 (DGLR), and glutamate 415 contribute to the substrate site. Histidine 419 contacts Zn(2+). Tyrosine 442 contributes to the substrate binding site. Histidine 483 is a Zn(2+) binding site. [4Fe-4S] cluster-binding residues include cysteine 563, cysteine 566, and cysteine 571.

It belongs to the ThiC family. In terms of assembly, homodimer. The cofactor is [4Fe-4S] cluster.

The enzyme catalyses 5-amino-1-(5-phospho-beta-D-ribosyl)imidazole + S-adenosyl-L-methionine = 4-amino-2-methyl-5-(phosphooxymethyl)pyrimidine + CO + 5'-deoxyadenosine + formate + L-methionine + 3 H(+). It functions in the pathway cofactor biosynthesis; thiamine diphosphate biosynthesis. In terms of biological role, catalyzes the synthesis of the hydroxymethylpyrimidine phosphate (HMP-P) moiety of thiamine from aminoimidazole ribotide (AIR) in a radical S-adenosyl-L-methionine (SAM)-dependent reaction. The chain is Phosphomethylpyrimidine synthase from Bradyrhizobium diazoefficiens (strain JCM 10833 / BCRC 13528 / IAM 13628 / NBRC 14792 / USDA 110).